The following is a 430-amino-acid chain: Histidine--tRNA ligase, chloroplastic (430 aa).

It belongs to the class-II aminoacyl-tRNA synthetase family.

The protein localises to the plastid. Its subcellular location is the chloroplast. It catalyses the reaction tRNA(His) + L-histidine + ATP = L-histidyl-tRNA(His) + AMP + diphosphate + H(+). The sequence is that of Histidine--tRNA ligase, chloroplastic (hisS) from Porphyra purpurea (Red seaweed).